The chain runs to 516 residues: Protein BTN1 (516 aa).

8 helical membrane-spanning segments follow: residues 24–44 (LFAA…IILS), 57–77 (GVVA…WPLL), 88–108 (VGFC…SSSL), 112–132 (LLGI…FLQL), 146–166 (LGAW…IWWL), 169–189 (GLGV…FPIT), 371–391 (PAII…TFFF), and 409–429 (SITI…SGYV).

The protein belongs to the battenin family.

It localises to the vacuole membrane. Functionally, involved in vacuolar transport and vacuole pH homeostasis. Also required for cytokinesis. The chain is Protein BTN1 (BTN1) from Cryptococcus neoformans var. neoformans serotype D (strain JEC21 / ATCC MYA-565) (Filobasidiella neoformans).